The following is a 279-amino-acid chain: Large ribosomal subunit protein uL2 (279 aa).

The interval 216–279 (KRPSVRGVVM…IQKRKRNRNR (64 aa)) is disordered. Over residues 270–279 (IQKRKRNRNR) the composition is skewed to basic residues.

The protein belongs to the universal ribosomal protein uL2 family. Part of the 50S ribosomal subunit. Forms a bridge to the 30S subunit in the 70S ribosome.

In terms of biological role, one of the primary rRNA binding proteins. Required for association of the 30S and 50S subunits to form the 70S ribosome, for tRNA binding and peptide bond formation. It has been suggested to have peptidyltransferase activity; this is somewhat controversial. Makes several contacts with the 16S rRNA in the 70S ribosome. The polypeptide is Large ribosomal subunit protein uL2 (Leptospira interrogans serogroup Icterohaemorrhagiae serovar copenhageni (strain Fiocruz L1-130)).